Here is a 273-residue protein sequence, read N- to C-terminus: MREKWAFLENTPQDAAINMALDEALLHWHQKGEIPPTLRFYRWNKPTLSIGYFQKVDGKIDLQGIKKHQCQLVRRMTGGSAVLHDDELTYSIVISEKHEKVASSIRQAYFDLSKGIVRAYQLLGIEVDHAHEPSSKGRSNICFEQPAFYELVAKGKKISGNAQIRKRGILLQHGSIPLSMNVEMLFDLFQFPADQMKERKKQRFYERATTINAELGEKQSYERVRNAFQQGFSEILNIELEPITLTEEQWKEVYQIAESNYSENNIKGAVSHV.

The region spanning 32-240 (GEIPPTLRFY…GFSEILNIEL (209 aa)) is the BPL/LPL catalytic domain. The active-site Acyl-thioester intermediate is the C142.

This sequence belongs to the octanoyltransferase LipM family. In terms of assembly, monomer.

The catalysed reaction is octanoyl-[ACP] + L-lysyl-[protein] = N(6)-octanoyl-L-lysyl-[protein] + holo-[ACP] + H(+). Its pathway is protein modification; protein lipoylation via endogenous pathway; protein N(6)-(lipoyl)lysine from octanoyl-[acyl-carrier-protein]. Its function is as follows. Catalyzes the transfer of endogenously produced octanoic acid from octanoyl-acyl-carrier-protein onto the lipoyl domain of GcvH, an intermediate carrier during protein lipoylation. The polypeptide is Octanoyltransferase LipM (Oceanobacillus iheyensis (strain DSM 14371 / CIP 107618 / JCM 11309 / KCTC 3954 / HTE831)).